We begin with the raw amino-acid sequence, 391 residues long: Ethanol acetyltransferase 1 (391 aa).

The N-terminal 24 residues, 1 to 24 (MFFTKVLNNQVANGLKQLPVHKRV), are a transit peptide targeting the mitochondrion. One can recognise an AB hydrolase-1 domain in the interval 48 to 154 (PIVFVHGIFG…DNSPIEQPHI (107 aa)). Catalysis depends on charge relay system residues Ser121, Asp145, and His295.

Belongs to the AB hydrolase superfamily.

Its subcellular location is the mitochondrion. It catalyses the reaction ethanol + acetyl-CoA = ethyl acetate + CoA. The enzyme catalyses acetyl-CoA + H2O = acetate + CoA + H(+). It carries out the reaction ethyl acetate + H2O = ethanol + acetate + H(+). Its activity is regulated as follows. By ethanol. Thioesterase and esterase reactions are highly repressed in the presence of high ethanol concentrations. Its function is as follows. Alcohol acetyltransferase that catalyzes the synthesis of ethyl acetate from ethanol and acetyl-CoA. Can also function as a thioesterase by hydrolyzing acetyl-CoA in the absence of ethanol, as well as esterase hydrolyzing ethyl acetate. This chain is Ethanol acetyltransferase 1 (EAT1), found in Wickerhamomyces anomalus (strain ATCC 58044 / CBS 1984 / NCYC 433 / NRRL Y-366-8) (Yeast).